The chain runs to 218 residues: uncharacterized protein (218 aa).

A signal peptide spans 1-17 (MLKKIIILFLGIFLLSS). A lipid anchor (N-palmitoyl cysteine) is attached at Cys-18. A lipid anchor (S-diacylglycerol cysteine) is attached at Cys-18. Positions 136–164 (YKEKKIEEELNQIKAMLKETKRDITKYTC) form a coiled coil.

The protein localises to the cell membrane. This is an uncharacterized protein from Rickettsia typhi (strain ATCC VR-144 / Wilmington).